Reading from the N-terminus, the 187-residue chain is Threonylcarbamoyl-AMP synthase (187 aa).

The region spanning 3–187 is the YrdC-like domain; sequence EVLPADVAEL…AKSGQVIRKG (185 aa).

It belongs to the SUA5 family. TsaC subfamily.

It localises to the cytoplasm. The enzyme catalyses L-threonine + hydrogencarbonate + ATP = L-threonylcarbamoyladenylate + diphosphate + H2O. In terms of biological role, required for the formation of a threonylcarbamoyl group on adenosine at position 37 (t(6)A37) in tRNAs that read codons beginning with adenine. Catalyzes the conversion of L-threonine, HCO(3)(-)/CO(2) and ATP to give threonylcarbamoyl-AMP (TC-AMP) as the acyladenylate intermediate, with the release of diphosphate. This Shewanella halifaxensis (strain HAW-EB4) protein is Threonylcarbamoyl-AMP synthase.